An 85-amino-acid polypeptide reads, in one-letter code: Toxin 3FTx-Lei1 (85 aa).

The first 21 residues, M1–T21, serve as a signal peptide directing secretion. 5 disulfide bridges follow: C24–C45, C27–C32, C38–C63, C67–C78, and C79–C84.

It belongs to the three-finger toxin family. Ancestral subfamily. As to expression, expressed by the venom gland.

The protein localises to the secreted. This is Toxin 3FTx-Lei1 from Leioheterodon madagascariensis (Malagasy giant hognose snake).